We begin with the raw amino-acid sequence, 151 residues long: Transcription antitermination protein NusB (151 aa).

The protein belongs to the NusB family.

Functionally, involved in transcription antitermination. Required for transcription of ribosomal RNA (rRNA) genes. Binds specifically to the boxA antiterminator sequence of the ribosomal RNA (rrn) operons. This chain is Transcription antitermination protein NusB, found in Thermodesulfovibrio yellowstonii (strain ATCC 51303 / DSM 11347 / YP87).